The chain runs to 143 residues: Large-conductance mechanosensitive channel (143 aa).

A run of 2 helical transmembrane segments spans residues 16 to 36 (VIDL…VTAL) and 84 to 104 (INTV…VKLI).

Belongs to the MscL family. As to quaternary structure, homopentamer.

The protein localises to the cell inner membrane. Functionally, channel that opens in response to stretch forces in the membrane lipid bilayer. May participate in the regulation of osmotic pressure changes within the cell. This chain is Large-conductance mechanosensitive channel, found in Xanthomonas axonopodis pv. citri (strain 306).